A 218-amino-acid polypeptide reads, in one-letter code: Pyridoxine/pyridoxamine 5'-phosphate oxidase (218 aa).

Substrate is bound by residues 14 to 17 and K72; that span reads RREY. FMN-binding positions include 67–72, 82–83, R88, K89, and Q111; these read RIVLLK and YT. The substrate site is built by Y129, R133, and S137. FMN contacts are provided by residues 146–147 and W191; that span reads QS. Residue 197–199 coordinates substrate; that stretch reads RLH. R201 provides a ligand contact to FMN.

Belongs to the pyridoxamine 5'-phosphate oxidase family. As to quaternary structure, homodimer. FMN is required as a cofactor.

It carries out the reaction pyridoxamine 5'-phosphate + O2 + H2O = pyridoxal 5'-phosphate + H2O2 + NH4(+). The enzyme catalyses pyridoxine 5'-phosphate + O2 = pyridoxal 5'-phosphate + H2O2. The protein operates within cofactor metabolism; pyridoxal 5'-phosphate salvage; pyridoxal 5'-phosphate from pyridoxamine 5'-phosphate: step 1/1. It functions in the pathway cofactor metabolism; pyridoxal 5'-phosphate salvage; pyridoxal 5'-phosphate from pyridoxine 5'-phosphate: step 1/1. In terms of biological role, catalyzes the oxidation of either pyridoxine 5'-phosphate (PNP) or pyridoxamine 5'-phosphate (PMP) into pyridoxal 5'-phosphate (PLP). The chain is Pyridoxine/pyridoxamine 5'-phosphate oxidase from Klebsiella pneumoniae subsp. pneumoniae (strain ATCC 700721 / MGH 78578).